We begin with the raw amino-acid sequence, 319 residues long: Phosphoenolpyruvate transferase (319 aa).

Aspartate 50 is a 7,8-didemethyl-8-hydroxy-5-deazariboflavin binding site.

Belongs to the CofD family. In terms of assembly, homodimer. It depends on Mg(2+) as a cofactor.

It catalyses the reaction enolpyruvoyl-2-diphospho-5'-guanosine + 7,8-didemethyl-8-hydroxy-5-deazariboflavin = dehydro coenzyme F420-0 + GMP + H(+). It functions in the pathway cofactor biosynthesis; coenzyme F420 biosynthesis. Catalyzes the transfer of the phosphoenolpyruvate moiety from enoylpyruvoyl-2-diphospho-5'-guanosine (EPPG) to 7,8-didemethyl-8-hydroxy-5-deazariboflavin (FO) with the formation of dehydro coenzyme F420-0 and GMP. This is Phosphoenolpyruvate transferase from Streptomyces coelicolor (strain ATCC BAA-471 / A3(2) / M145).